The chain runs to 122 residues: Large ribosomal subunit protein bL12 (122 aa).

It belongs to the bacterial ribosomal protein bL12 family. In terms of assembly, homodimer. Part of the ribosomal stalk of the 50S ribosomal subunit. Forms a multimeric L10(L12)X complex, where L10 forms an elongated spine to which 2 to 4 L12 dimers bind in a sequential fashion. Binds GTP-bound translation factors.

Forms part of the ribosomal stalk which helps the ribosome interact with GTP-bound translation factors. Is thus essential for accurate translation. This Staphylococcus epidermidis (strain ATCC 35984 / DSM 28319 / BCRC 17069 / CCUG 31568 / BM 3577 / RP62A) protein is Large ribosomal subunit protein bL12.